A 513-amino-acid chain; its full sequence is Na(+)/H(+) antiporter NhaB (513 aa).

Transmembrane regions (helical) follow at residues 23–43 (LALIIFLILNPLIFIISPFVA), 52–72 (IFTLAMALKCYPLLPGGLLAI), 97–117 (LLLMFMVAGIYFMKQLLLFIF), 144–164 (FLDALTVVAVVISVAVGFYGI), 202–222 (LMMHAGVGTALGGVMTMVGEP), 238–258 (FFLRMSPVTVPVLICGLLTCL), 303–323 (AIIGVWLVTALALHLAEVGLI), 348–368 (TESLPFTALLTVFFSVVAVII), 391–411 (LFYIFNGLLSSISDNVFVGTI), 447–467 (ATPNGQAAFLFLLTSALAPLI), and 475–495 (VWMALPYTLVLTLVGLLCVEF).

The protein belongs to the NhaB Na(+)/H(+) (TC 2.A.34) antiporter family.

The protein resides in the cell inner membrane. It carries out the reaction 2 Na(+)(in) + 3 H(+)(out) = 2 Na(+)(out) + 3 H(+)(in). In terms of biological role, na(+)/H(+) antiporter that extrudes sodium in exchange for external protons. This is Na(+)/H(+) antiporter NhaB from Escherichia coli (strain SMS-3-5 / SECEC).